The following is a 723-amino-acid chain: Fatty acid oxidation complex subunit alpha (723 aa).

An enoyl-CoA hydratase/isomerase region spans residues 1 to 189 (MIYQAETLQV…KIGLLDAVVD (189 aa)). Asp-296 serves as a coordination point for substrate. A 3-hydroxyacyl-CoA dehydrogenase region spans residues 311-723 (SKDTQRAAVL…FYGAQQQGSI (413 aa)). NAD(+)-binding positions include Met-325, Asp-344, 401–403 (VVE), Lys-408, and Ser-430. The For 3-hydroxyacyl-CoA dehydrogenase activity role is filled by His-451. Asn-454 lines the NAD(+) pocket. Substrate-binding residues include Asn-501 and Tyr-661.

This sequence in the N-terminal section; belongs to the enoyl-CoA hydratase/isomerase family. It in the C-terminal section; belongs to the 3-hydroxyacyl-CoA dehydrogenase family. Heterotetramer of two alpha chains (FadB) and two beta chains (FadA).

It carries out the reaction a (3S)-3-hydroxyacyl-CoA + NAD(+) = a 3-oxoacyl-CoA + NADH + H(+). The catalysed reaction is a (3S)-3-hydroxyacyl-CoA = a (2E)-enoyl-CoA + H2O. The enzyme catalyses a 4-saturated-(3S)-3-hydroxyacyl-CoA = a (3E)-enoyl-CoA + H2O. It catalyses the reaction (3S)-3-hydroxybutanoyl-CoA = (3R)-3-hydroxybutanoyl-CoA. It carries out the reaction a (3Z)-enoyl-CoA = a 4-saturated (2E)-enoyl-CoA. The catalysed reaction is a (3E)-enoyl-CoA = a 4-saturated (2E)-enoyl-CoA. It functions in the pathway lipid metabolism; fatty acid beta-oxidation. Functionally, involved in the aerobic and anaerobic degradation of long-chain fatty acids via beta-oxidation cycle. Catalyzes the formation of 3-oxoacyl-CoA from enoyl-CoA via L-3-hydroxyacyl-CoA. It can also use D-3-hydroxyacyl-CoA and cis-3-enoyl-CoA as substrate. In Vibrio campbellii (strain ATCC BAA-1116), this protein is Fatty acid oxidation complex subunit alpha.